A 568-amino-acid polypeptide reads, in one-letter code: Proline--tRNA ligase (568 aa).

It belongs to the class-II aminoacyl-tRNA synthetase family. ProS type 1 subfamily. As to quaternary structure, homodimer.

Its subcellular location is the cytoplasm. It catalyses the reaction tRNA(Pro) + L-proline + ATP = L-prolyl-tRNA(Pro) + AMP + diphosphate. Functionally, catalyzes the attachment of proline to tRNA(Pro) in a two-step reaction: proline is first activated by ATP to form Pro-AMP and then transferred to the acceptor end of tRNA(Pro). As ProRS can inadvertently accommodate and process non-cognate amino acids such as alanine and cysteine, to avoid such errors it has two additional distinct editing activities against alanine. One activity is designated as 'pretransfer' editing and involves the tRNA(Pro)-independent hydrolysis of activated Ala-AMP. The other activity is designated 'posttransfer' editing and involves deacylation of mischarged Ala-tRNA(Pro). The misacylated Cys-tRNA(Pro) is not edited by ProRS. This chain is Proline--tRNA ligase, found in Chromobacterium violaceum (strain ATCC 12472 / DSM 30191 / JCM 1249 / CCUG 213 / NBRC 12614 / NCIMB 9131 / NCTC 9757 / MK).